The following is a 129-amino-acid chain: L-ectoine synthase (129 aa).

The protein belongs to the ectoine synthase family.

It catalyses the reaction (2S)-4-acetamido-2-aminobutanoate = L-ectoine + H2O. The protein operates within amine and polyamine biosynthesis; ectoine biosynthesis; L-ectoine from L-aspartate 4-semialdehyde: step 3/3. In terms of biological role, catalyzes the circularization of gamma-N-acetyl-alpha,gamma-diaminobutyric acid (ADABA) to ectoine (1,4,5,6-tetrahydro-2-methyl-4-pyrimidine carboxylic acid), which is an excellent osmoprotectant. The sequence is that of L-ectoine synthase from Desulfosudis oleivorans (strain DSM 6200 / JCM 39069 / Hxd3) (Desulfococcus oleovorans).